Reading from the N-terminus, the 814-residue chain is Glycosyltransferase GlyD (814 aa).

Residues Met-1 to Glu-264 are GT8 domain. Residues Ala-8–Tyr-13 and Asp-102–Ser-103 each bind UDP. Mn(2+) is bound by residues Asp-102, Asp-104, and His-226. His-226–Lys-232 contacts UDP. Residues Glu-542 to Asn-814 are GT-D domain.

It in the N-terminal section; belongs to the glycosyltransferase 8 family. In the C-terminal section; belongs to the GT-D family.

It functions in the pathway protein modification; protein glycosylation. Its function is as follows. Involved in the polymorphic O-glycosylation of the serine-rich repeat protein PsrP. Catalyzes the third step in glycosylation PsrP in this bacteria. Transfers glucose from UDP-glucose to the terminal glucose moiety of already-glycosylated PsrP (using truncated substrates with PsrP SSR1-GlcNAc-Glc); the C-terminal GT-D domain is sufficient for this reaction in vitro. Also transfers galactose from UDP-galactose to the terminal glucose moiety of already-glycosylated PsrP; the C-terminal GT-D domain is also sufficient for this reaction in vitro. Activity is much higher with UDP-glucose, and the enzyme has a very marked preference for PsrP substrate that has already been modified by GlcNAc and glucose. In vitro has hydrolytic activity against UDP-galactose and to a lesser extent against UDP-glucose. Also catalyzes the fourth step in glycosylation of PsrP in this bacteria. Can transfer the sugar from both UDP-glucose and UDP-galactose to the terminal sugar moiety of PsrP-GlcNAc-Glc-Glc and PsrP-GlcNAc-Glc-Gal; the C-terminal GT-D domain is also sufficient for this reaction in vitro (using truncated substrates with glycosylated PsrP SSR1). The N-terminal GT-D domain can transfer galactose from UDP-galactose to PsrP-GlcNAc-Glc-Gal or PsrP-GlcNAc-Glc-Glc in the fourth step. In Streptococcus pneumoniae serotype 4 (strain ATCC BAA-334 / TIGR4), this protein is Glycosyltransferase GlyD.